Here is a 657-residue protein sequence, read N- to C-terminus: THO complex subunit 1 (657 aa).

At Met1 the chain carries N-acetylmethionine. Phosphoserine is present on Ser2. Position 4 is a phosphothreonine (Thr4). Lys31 participates in a covalent cross-link: Glycyl lysine isopeptide (Lys-Gly) (interchain with G-Cter in SUMO2). Lys133 carries the post-translational modification N6-acetyllysine. The tract at residues 133–167 (KNYLLRMCNDLLRRLSKSQNTVFCGRIQLFLARLF) is dock domain; interaction with THOC2. The tract at residues 194–221 (QESTLGQKHTEDREEGMDVEEGEMGDDE) is disordered. Over residues 206-221 (REEGMDVEEGEMGDDE) the composition is skewed to acidic residues. The interval 227-397 (SIPIDYNLYR…WNSWKNEGCP (171 aa)) is dock domain; interaction with THOC2. Lys300 bears the N6-acetyllysine mark. A Glycyl lysine isopeptide (Lys-Gly) (interchain with G-Cter in SUMO2) cross-link involves residue Lys408. The Nuclear localization signal motif lies at 414-430 (RKRAAPEDFLGKGPNKK). Residues 533–569 (LPPPSEEIKTGEDEDEEDNDALLKENESPDVRRDKPI) form a disordered region. The residue at position 537 (Ser537) is a Phosphoserine. Thr542 is modified (phosphothreonine). The segment covering 553 to 569 (ALLKENESPDVRRDKPI) has biased composition (basic and acidic residues). Ser560 is subject to Phosphoserine. Positions 570-653 (TGEQIESFAN…DLAESLTNDT (84 aa)) constitute a Death domain. A Glycyl lysine isopeptide (Lys-Gly) (interchain with G-Cter in SUMO2) cross-link involves residue Lys580. Lys595 is covalently cross-linked (Glycyl lysine isopeptide (Lys-Gly) (interchain with G-Cter in SUMO1); alternate). Lys595 participates in a covalent cross-link: Glycyl lysine isopeptide (Lys-Gly) (interchain with G-Cter in SUMO2); alternate.

Belongs to the THOC1 family. In terms of assembly, component of the THO subcomplex, which is composed of THOC1, THOC2, THOC3, THOC5, THOC6 and THOC7. The THO subcomplex interacts with DDX39B to form the THO-DDX39B complex which multimerizes into a 28-subunit tetrameric assembly. Component of the transcription/export (TREX) complex at least composed of ALYREF/THOC4, DDX39B, SARNP/CIP29, CHTOP and the THO subcomplex; in the complex interacts with THOC2, THOC5 and THOC7. TREX seems to have a dynamic structure involving ATP-dependent remodeling. Binds to the hypophosphorylated form of RB1. Interacts with RNA polymerase II. Interacts with LUZP4. Interacts with THOC5. Expression is altered specifically during apoptosis and is accompanied by the appearance of novel forms with smaller apparent molecular mass. Post-translationally, polyubiquitinated, leading to proteasomal degradation; probably involves NEDD4. In terms of tissue distribution, in the inner ear, specifically expressed in inner and outer hair cells (at protein level).

It localises to the nucleus. The protein resides in the nucleoplasm. The protein localises to the nucleus matrix. It is found in the cytoplasm. Its subcellular location is the cytosol. Component of the THO subcomplex of the TREX complex which is thought to couple mRNA transcription, processing and nuclear export, and which specifically associates with spliced mRNA and not with unspliced pre-mRNA. Required for efficient export of polyadenylated RNA. The THOC1-THOC2-THOC3 core complex alone is sufficient to bind export factor NXF1-NXT1 and promote ATPase activity of DDX39B. TREX is recruited to spliced mRNAs by a transcription-independent mechanism, binds to mRNA upstream of the exon-junction complex (EJC) and is recruited in a splicing- and cap-dependent manner to a region near the 5' end of the mRNA where it functions in mRNA export to the cytoplasm via the TAP/NXF1 pathway. Regulates transcriptional elongation of a subset of genes. Involved in genome stability by preventing co-transcriptional R-loop formation. May play a role in hair cell formation, hence may be involved in hearing. In terms of biological role, participates in an apoptotic pathway which is characterized by activation of caspase-6, increases in the expression of BAK1 and BCL2L1 and activation of NF-kappa-B. This pathway does not require p53/TP53, nor does the presence of p53/TP53 affect the efficiency of cell killing. Activates a G2/M cell cycle checkpoint prior to the onset of apoptosis. Apoptosis is inhibited by association with RB1. Essential for early embryonic development. Required for normal gene expression during postnatal testis development. The protein is THO complex subunit 1 (Thoc1) of Mus musculus (Mouse).